Reading from the N-terminus, the 143-residue chain is Ribosome-binding factor A (143 aa).

The segment at 123-143 (DNSLQENYKDSDKETKVEKLR) is disordered.

Belongs to the RbfA family. Monomer. Binds 30S ribosomal subunits, but not 50S ribosomal subunits or 70S ribosomes.

The protein resides in the cytoplasm. In terms of biological role, one of several proteins that assist in the late maturation steps of the functional core of the 30S ribosomal subunit. Associates with free 30S ribosomal subunits (but not with 30S subunits that are part of 70S ribosomes or polysomes). Required for efficient processing of 16S rRNA. May interact with the 5'-terminal helix region of 16S rRNA. The chain is Ribosome-binding factor A from Francisella philomiragia subsp. philomiragia (strain ATCC 25017 / CCUG 19701 / FSC 153 / O#319-036).